Consider the following 323-residue polypeptide: MMDPQIERKLIEIMRVIHESDKPIGARAIADELNNRGYDIGERAVRYHLRILDERGFTRKHGYAGRTLTDLGENEMNDALIGDRFGFVISRIEEMAFRTTYNPETDKGDVVVNISYFDKDDFETVIELISYTAHAGYMISPRVRIFEEDSLEMSLPPGKIGIATVCSVTFDGLLLKAGIPVEPAYGGILQIENKKPARFLDLISYSGTSIDPIKIFMNRTPTSVLEVLEKGEGKILANMRQINSSAYEMTGKILKKAEKVGLAGCITLGEIDEYLLGAPVETGKFGAAVVGGINGICALEETGIEIETNPISTMLDYQTMKEI.

The winged helix-turn-helix stretch occupies residues 11-76 (IEIMRVIHES…TLTDLGENEM (66 aa)). The tract at residues 86–323 (GFVISRIEEM…MLDYQTMKEI (238 aa)) is NRD.

This sequence belongs to the NrpR family. Forms a complex with NrpRII and the general archaeal transcription factors TBP and TFB. Interacts directly with NrpRII.

With respect to regulation, under nitrogen limitation, binding of 2-oxoglutarate to the NrpRI/NrpRII complex decreases the binding affinity of NrpRI to DNA as well as the binding affinity of NrpRII to TBP and TFB, which leads to removal of the complex from the operator, RNA polymerase recruitment and initiation of transcription. In terms of biological role, plays a major role in nitrogen regulation. Under nitrogen sufficiency, binds to the nifH and the glnk1 promoters, leading to repression of the transcription of the genes. This is Global nitrogen regulator NrpRI from Methanosarcina mazei (strain ATCC BAA-159 / DSM 3647 / Goe1 / Go1 / JCM 11833 / OCM 88) (Methanosarcina frisia).